The following is a 259-amino-acid chain: Expansin-B6 (259 aa).

A signal peptide spans 1-24 (MASSSHRYFALLALFAVSLKFCYC). The N-linked (GlcNAc...) asparagine glycan is linked to asparagine 26. The region spanning 52 to 160 (GGACGFAVAN…IRVECLYRRT (109 aa)) is the Expansin-like EG45 domain. 3 cysteine pairs are disulfide-bonded: cysteine 55-cysteine 82, cysteine 85-cysteine 155, and cysteine 90-cysteine 96. The 82-residue stretch at 173–254 (YYISFVVEYE…NWKPNETYRS (82 aa)) folds into the Expansin-like CBD domain. N-linked (GlcNAc...) asparagine glycosylation is present at asparagine 249.

This sequence belongs to the expansin family. Expansin B subfamily.

The protein resides in the secreted. It is found in the cell wall. The protein localises to the membrane. Functionally, may cause loosening and extension of plant cell walls by disrupting non-covalent bonding between cellulose microfibrils and matrix glucans. The sequence is that of Expansin-B6 from Arabidopsis thaliana (Mouse-ear cress).